Here is a 316-residue protein sequence, read N- to C-terminus: Metal cation efflux system protein CzcD (316 aa).

Topologically, residues 1 to 16 (MGAGHSHDHPGGNERS) are cytoplasmic. A helical membrane pass occupies residues 17 to 37 (LKIALALTGTFLIAEVVGGVM). Topologically, residues 38–46 (TKSLALISD) are periplasmic. The helical transmembrane segment at 47–67 (AAHMLTDTVALAIALAAIAIA) threads the bilayer. Topologically, residues 68-81 (KRPADKKRTFGYYR) are cytoplasmic. A helical transmembrane segment spans residues 82–102 (FEILAAAFNALLLFGVAIYIL). Residues 103–114 (YEAYLRLKSPPQ) are Periplasmic-facing. A helical transmembrane segment spans residues 115–135 (IESTGMFVVAVLGLIINLISM). The Cytoplasmic portion of the chain corresponds to 136-151 (RMLSSGQSSSLNVKGA). The next 2 membrane-spanning stretches (helical) occupy residues 152-172 (YLEVWSDLLGSVGVIAGAIII) and 174-194 (FTGWAWVDSAIAVLIGLWVLP). Residues 195–316 (RTWILLKSSL…GSKSLAAGGN (122 aa)) are Cytoplasmic-facing.

The protein belongs to the cation diffusion facilitator (CDF) transporter (TC 2.A.4) family. SLC30A subfamily.

The protein resides in the cell inner membrane. Its activity is regulated as follows. Efflux is inhibited by FCCP. In terms of biological role, mediates a low-level metal ion resistance, probably by efflux of cations from the cytoplasm into the periplasm. Also mediates resistance to cobalt, cadmium and zinc via regulation of the Czc system. May repress expression of the Czc system by an export of the inducing cations. Binds and transports zinc. Can also bind cobalt, copper and nickel. This chain is Metal cation efflux system protein CzcD (czcD), found in Cupriavidus metallidurans (strain ATCC 43123 / DSM 2839 / NBRC 102507 / CH34) (Ralstonia metallidurans).